A 1072-amino-acid polypeptide reads, in one-letter code: Carbamoyl phosphate synthase large chain (1072 aa).

The interval 1–401 (MPKRLDINTI…SLLKAVRSLE (401 aa)) is carboxyphosphate synthetic domain. R129, R169, G175, G176, K208, I210, E215, G241, V242, H243, Q284, and E298 together coordinate ATP. In terms of domain architecture, ATP-grasp 1 spans 133–327 (RTLMQELNEP…IAKLAAKIAV (195 aa)). Residues Q284, E298, and N300 each coordinate Mg(2+). Mn(2+)-binding residues include Q284, E298, and N300. Residues 402–546 (LGVYHLELEH…YSTYGDENES (145 aa)) are oligomerization domain. A carbamoyl phosphate synthetic domain region spans residues 547-929 (VRTDRKSVVV…ALYKGLVASG (383 aa)). An ATP-grasp 2 domain is found at 671–861 (EAALTQLGIP…MANVATKVIL (191 aa)). Positions 707, 746, 752, 777, 778, 779, 780, 820, and 832 each coordinate ATP. Residues Q820, E832, and N834 each coordinate Mg(2+). Residues Q820, E832, and N834 each coordinate Mn(2+). The MGS-like domain occupies 930–1072 (INIPTHGSVI…QTKRHEVVHA (143 aa)). The tract at residues 930–1072 (INIPTHGSVI…QTKRHEVVHA (143 aa)) is allosteric domain.

Belongs to the CarB family. As to quaternary structure, composed of two chains; the small (or glutamine) chain promotes the hydrolysis of glutamine to ammonia, which is used by the large (or ammonia) chain to synthesize carbamoyl phosphate. Tetramer of heterodimers (alpha,beta)4. It depends on Mg(2+) as a cofactor. The cofactor is Mn(2+).

The catalysed reaction is hydrogencarbonate + L-glutamine + 2 ATP + H2O = carbamoyl phosphate + L-glutamate + 2 ADP + phosphate + 2 H(+). It catalyses the reaction hydrogencarbonate + NH4(+) + 2 ATP = carbamoyl phosphate + 2 ADP + phosphate + 2 H(+). It functions in the pathway amino-acid biosynthesis; L-arginine biosynthesis; carbamoyl phosphate from bicarbonate: step 1/1. Its pathway is pyrimidine metabolism; UMP biosynthesis via de novo pathway; (S)-dihydroorotate from bicarbonate: step 1/3. In terms of biological role, large subunit of the glutamine-dependent carbamoyl phosphate synthetase (CPSase). CPSase catalyzes the formation of carbamoyl phosphate from the ammonia moiety of glutamine, carbonate, and phosphate donated by ATP, constituting the first step of 2 biosynthetic pathways, one leading to arginine and/or urea and the other to pyrimidine nucleotides. The large subunit (synthetase) binds the substrates ammonia (free or transferred from glutamine from the small subunit), hydrogencarbonate and ATP and carries out an ATP-coupled ligase reaction, activating hydrogencarbonate by forming carboxy phosphate which reacts with ammonia to form carbamoyl phosphate. The sequence is that of Carbamoyl phosphate synthase large chain from Bacillus cereus (strain G9842).